The sequence spans 74 residues: Chitinases 70, 30, and 20.5 kDa (74 aa).

Residues 1–27 (XTSATATYAKTQDWGSCFEGKWTIKNT) form an N-terminus of 70 kDa chitinase region. Residues 28–52 (AACSSYPSWVAGRSYAAGDIVYYTD) form an N-terminus of 30 kDa chitinase region. Residues 53-74 (XGYTDLPVSRQKMCQNGMVTNC) form an N-terminus of 20.5 kDa chitinase region.

It belongs to the glycosyl hydrolase 18 family. Chitinase class II subfamily. In terms of assembly, homodimer, but homotrimers and homotetramers could be observed for the 20.5 and 30 kDa chitinases. In terms of processing, the 70 kDa chitinase is probably the precursor protein of the 30 and 20.5 kDa chitinases.

It catalyses the reaction Random endo-hydrolysis of N-acetyl-beta-D-glucosaminide (1-&gt;4)-beta-linkages in chitin and chitodextrins.. In terms of biological role, able to cleave chitin oligomers from N=3 to 6. The sequence is that of Chitinases 70, 30, and 20.5 kDa from Streptomyces olivaceoviridis (Streptomyces corchorusii).